A 213-amino-acid polypeptide reads, in one-letter code: Adenylate kinase (213 aa).

ATP is bound at residue 10–15; the sequence is GAGKGT. The segment at 30-59 is NMP; sequence STGDMLRAALKEGTPLGLEAKKYMDQGALV. AMP-binding positions include Thr-31, Arg-36, 57–59, 85–88, and Gln-92; these read ALV and GFPR. Residues 126–163 form an LID region; sequence GRRTCRSCGAGFHVMFDPPKTDGKCDKCGGELYQRDDD. Residue Arg-127 coordinates ATP. 4 residues coordinate Zn(2+): Cys-130, Cys-133, Cys-150, and Cys-153. AMP is bound by residues Arg-160 and Arg-171. Gly-199 contacts ATP.

The protein belongs to the adenylate kinase family. Monomer.

It is found in the cytoplasm. It catalyses the reaction AMP + ATP = 2 ADP. Its pathway is purine metabolism; AMP biosynthesis via salvage pathway; AMP from ADP: step 1/1. Functionally, catalyzes the reversible transfer of the terminal phosphate group between ATP and AMP. Plays an important role in cellular energy homeostasis and in adenine nucleotide metabolism. The sequence is that of Adenylate kinase from Syntrophobacter fumaroxidans (strain DSM 10017 / MPOB).